A 234-amino-acid chain; its full sequence is Multicopy suppressor of SEC21 protein 27 (234 aa).

The Cytoplasmic segment spans residues 1–47 (MQTPLESTDVKLDTLNEPSAHLIEKNVALPKDIFRSYLSYWIYEIAR). The residue at position 3 (Thr3) is a Phosphothreonine. A helical membrane pass occupies residues 48-68 (YTPVMILSLVIGVLVLLIIFF). The Extracellular portion of the chain corresponds to 69–72 (NDNE). The helical transmembrane segment at 73–93 (ACVFNSAYYAYLSLVVLLIIL) threads the bilayer. The Cytoplasmic segment spans residues 94–234 (GDGNPKLVSR…NIDALLKKTE (141 aa)). The COPI binding stretch occupies residues 231–234 (KKTE).

This sequence belongs to the DUP/COS family. As to quaternary structure, interacts with MST28. Binds to coatomer proteins of COPI and SEC23/SEC24 of COPII coated vesicles.

The protein localises to the endoplasmic reticulum. It localises to the golgi apparatus. It is found in the cytoplasmic vesicle. The protein resides in the COPI-coated vesicle membrane. Its subcellular location is the COPII-coated vesicle membrane. In terms of biological role, involved in protein trafficking vesicle formation, probably by stabilizing of coatomer at the Golgi membrane and thus allowing the efficient formation of COPI coated vesicles. This Saccharomyces cerevisiae (strain ATCC 204508 / S288c) (Baker's yeast) protein is Multicopy suppressor of SEC21 protein 27 (MST27).